The chain runs to 61 residues: Metallothionein-2 (61 aa).

Met-1 bears the N-acetylmethionine mark. A beta region spans residues 1-29 (MDPNCSCVAGDSCTCAGSCKCKECKCTSC). Cys-5, Cys-7, Cys-13, Cys-15, Cys-19, Cys-21, Cys-24, Cys-26, Cys-29, Cys-33, Cys-34, Cys-36, Cys-37, Cys-41, Cys-44, Cys-48, Cys-50, Cys-57, Cys-59, and Cys-60 together coordinate a divalent metal cation. The antigenic epitope stretch occupies residues 20–25 (KCKECK). Positions 30–61 (KKSCCSCCPVGCAKCAQGCICKGASDKCNCCA) are alpha.

The protein belongs to the metallothionein superfamily. Type 1 family.

In terms of biological role, metallothioneins have a high content of cysteine residues that bind various heavy metals; these proteins are transcriptionally regulated by both heavy metals and glucocorticoids. This Macaca fascicularis (Crab-eating macaque) protein is Metallothionein-2 (MT2).